The chain runs to 290 residues: MNFQNIIFELNNYWAEQGCVVQQPYDMEVGAGTFHPATLLRSLGPEPWKAAYAQPSRRPTDGRYGENPNRLQHYYQYQVVMKPSPLNIQELYLGSLKRFGLNLLEHDIRFVEDDWESPTLGASGLGWEIWLDGMEISQFTYFQQAGSIDLTPTTVEITYGLERIAMYLQGVESVYDIAWNDEVTYGEIFHQAEVEFSTFNFEEANVEKLTDFFNSFEEEAHKLIAKKLILPAYDYCLKCSHTFNLLDARKAISVTERTRYIGRIRNIARGVAEQYVIQRAELGHPLIKNK.

Belongs to the class-II aminoacyl-tRNA synthetase family. In terms of assembly, tetramer of two alpha and two beta subunits.

The protein localises to the cytoplasm. The enzyme catalyses tRNA(Gly) + glycine + ATP = glycyl-tRNA(Gly) + AMP + diphosphate. The chain is Glycine--tRNA ligase alpha subunit from Desulfotalea psychrophila (strain LSv54 / DSM 12343).